The sequence spans 632 residues: Threonine--tRNA ligase (632 aa).

Residues 1–61 (MPIVTLPDGS…EHDAEVSILT (61 aa)) form the TGS domain. Residues 242–533 (DHRKLARKLD…LIEHYAGSMP (292 aa)) form a catalytic region. Zn(2+) contacts are provided by cysteine 333, histidine 384, and histidine 510.

It belongs to the class-II aminoacyl-tRNA synthetase family. Homodimer. It depends on Zn(2+) as a cofactor.

Its subcellular location is the cytoplasm. The catalysed reaction is tRNA(Thr) + L-threonine + ATP = L-threonyl-tRNA(Thr) + AMP + diphosphate + H(+). Functionally, catalyzes the attachment of threonine to tRNA(Thr) in a two-step reaction: L-threonine is first activated by ATP to form Thr-AMP and then transferred to the acceptor end of tRNA(Thr). Also edits incorrectly charged L-seryl-tRNA(Thr). In Chromohalobacter salexigens (strain ATCC BAA-138 / DSM 3043 / CIP 106854 / NCIMB 13768 / 1H11), this protein is Threonine--tRNA ligase.